We begin with the raw amino-acid sequence, 183 residues long: I-kappa-B like protein N2 (183 aa).

ANK repeat units follow at residues 62 to 95 (DGNTCLHEAALRNKGPQAIRIMEKLIEYGADLNL) and 99 to 129 (CHKPVLHVAVERNDYELVAWICQQPGINLEA). Positions 163-183 (PRQDGSSEDEVSDSEEKSDSE) are disordered.

The protein belongs to the polydnaviridae I-Kappa-B like protein family.

Functionally, suppresses the host immune response through NF-kappa-B inactivation. Possesses ankyrin repeat domains required for NF-kappa-B binding but lacks the regulatory regions required for dissociation from NF-kappa-B and degradation. Therefore, prevents host NF-kappa-B release and subsequent activation. In Microplitis demolitor (Parasitoid wasp), this protein is I-kappa-B like protein N2 (N5).